The following is a 62-amino-acid chain: Ferredoxin-1 (62 aa).

4Fe-4S ferredoxin-type domains lie at 3–32 and 33–62; these read WTVT…LQDG and KAVP…VEEN. Cys-12 and Cys-18 together coordinate [3Fe-4S] cluster. [4Fe-4S] cluster-binding residues include Cys-22, Cys-42, Cys-45, and Cys-48. Cys-52 lines the [3Fe-4S] cluster pocket.

As to quaternary structure, homodimer. [3Fe-4S] cluster serves as cofactor. The cofactor is [4Fe-4S] cluster.

Its function is as follows. Ferredoxins are iron-sulfur proteins that transfer electrons in a wide variety of metabolic reactions. This ferredoxin serves as a carrier for pyruvate dehydrogenase. The protein is Ferredoxin-1 of Nitratidesulfovibrio vulgaris (strain DSM 19637 / Miyazaki F) (Desulfovibrio vulgaris).